The chain runs to 712 residues: Eukaryotic peptide chain release factor GTP-binding subunit (712 aa).

The span at 1 to 23 shows a compositional bias: polar residues; it reads MSNPQDQLSNDLANASISGDQSK. Disordered regions lie at residues 1 to 64, 76 to 115, 132 to 162, and 184 to 256; these read MSNP…QYGG, GYQQ…QQQY, PQQQ…ASLN, and TKKV…APVS. The interval 16-143 is several sort of repeats; the sequence is SISGDQSKQP…QQQQQQTQSQ (128 aa). Low complexity-rich tracts occupy residues 24 to 35 and 48 to 64; these read QPQQQQPQQQQP and TGGY…QYGG. 2 stretches are compositionally biased toward low complexity: residues 132-141 and 190-201; these read PQQQQQQQTQ and AKPAASKEASPA. The tract at residues 144 to 282 is charged; the sequence is GMSLADFQKQ…DEVDEEVVKD (139 aa). Residues 202–217 are compositionally biased toward basic and acidic residues; it reads PKDEEASAEPEAKKES. The segment covering 218 to 256 has biased composition (low complexity); the sequence is TPVPASSSPAPAAADSTPAPVKKESTPTPSVASKSAPVS. The region spanning 287–512 is the tr-type G domain; sequence KDHVSIIFMG…YLDNMDTMNR (226 aa). The tract at residues 296-303 is G1; the sequence is GHVDAGKS. 296 to 303 is a binding site for GTP; it reads GHVDAGKS. A G2 region spans residues 352–356; the sequence is GKTIE. Residue T370 is modified to Phosphothreonine. The segment at 373 to 376 is G3; the sequence is DAPG. Residues 373-377 and 435-438 contribute to the GTP site; these read DAPGH and NKMD. The tract at residues 435–438 is G4; that stretch reads NKMD. The segment at 476 to 478 is G5; the sequence is SGY.

The protein belongs to the TRAFAC class translation factor GTPase superfamily. Classic translation factor GTPase family. ERF3 subfamily.

It localises to the cytoplasm. Functionally, involved in translation termination. Stimulates the activity of ERF1. Binds guanine nucleotides. This chain is Eukaryotic peptide chain release factor GTP-binding subunit (SUP35), found in Candida maltosa (Yeast).